The sequence spans 259 residues: Putative carbamate hydrolase RutD (259 aa).

It belongs to the AB hydrolase superfamily. Hydrolase RutD family.

It carries out the reaction carbamate + 2 H(+) = NH4(+) + CO2. Its function is as follows. Involved in pyrimidine catabolism. May facilitate the hydrolysis of carbamate, a reaction that can also occur spontaneously. In Pseudomonas syringae pv. syringae (strain B728a), this protein is Putative carbamate hydrolase RutD.